The chain runs to 352 residues: Molybdenum import ATP-binding protein ModC (352 aa).

The ABC transporter domain occupies 2-230 (MLEINVKKRL…PLFEPWQEQG (229 aa)). 32-39 (GISGSGKS) is a binding site for ATP. One can recognise a Mop domain in the interval 290-352 (KTSIRNILSG…YAQIKAVSVM (63 aa)).

Belongs to the ABC transporter superfamily. Molybdate importer (TC 3.A.1.8) family. The complex is composed of two ATP-binding proteins (ModC), two transmembrane proteins (ModB) and a solute-binding protein (ModA).

Its subcellular location is the cell inner membrane. It catalyses the reaction molybdate(out) + ATP + H2O = molybdate(in) + ADP + phosphate + H(+). Functionally, part of the ABC transporter complex ModABC involved in molybdenum import. Responsible for energy coupling to the transport system. The chain is Molybdenum import ATP-binding protein ModC from Mannheimia succiniciproducens (strain KCTC 0769BP / MBEL55E).